The primary structure comprises 141 residues: MAKKVIKVVKLQIPAGKANPAPPVGPALGQAGVNIMAFCKEFNARTADQAGLIIPVEITVFEDRSFTFITKTPPAAVLLKKAAGIESGSGEPNRNKVATIKRDKVREIAELKMPDLNAASIEAAMRMIEGTARSMGIVIED.

It belongs to the universal ribosomal protein uL11 family. In terms of assembly, part of the ribosomal stalk of the 50S ribosomal subunit. Interacts with L10 and the large rRNA to form the base of the stalk. L10 forms an elongated spine to which L12 dimers bind in a sequential fashion forming a multimeric L10(L12)X complex. Post-translationally, one or more lysine residues are methylated.

Forms part of the ribosomal stalk which helps the ribosome interact with GTP-bound translation factors. The polypeptide is Large ribosomal subunit protein uL11 (Geobacillus kaustophilus (strain HTA426)).